A 177-amino-acid polypeptide reads, in one-letter code: O-acetyl-ADP-ribose deacetylase (177 aa).

Positions 1–175 (MKTRIHVVQG…LYERLLTQQG (175 aa)) constitute a Macro domain. Substrate is bound by residues 11–12 (DI), Asn25, 33–35 (GVD), and 122–126 (STGVY). The Proton acceptor role is filled by Asp35.

The protein belongs to the MacroD-type family. YmdB subfamily. In terms of assembly, homodimer. Interacts with RNase III.

The enzyme catalyses 3''-O-acetyl-ADP-D-ribose + H2O = ADP-D-ribose + acetate + H(+). It catalyses the reaction 2''-O-acetyl-ADP-D-ribose + H2O = ADP-D-ribose + acetate + H(+). In terms of biological role, deacetylates O-acetyl-ADP ribose to yield ADP-ribose and free acetate. Down-regulates ribonuclease 3 (RNase III) activity. Acts by interacting directly with the region of the ribonuclease that is required for dimerization/activation. The protein is O-acetyl-ADP-ribose deacetylase of Shigella dysenteriae serotype 1 (strain Sd197).